Reading from the N-terminus, the 132-residue chain is 3-aminoacrylate deaminase RutC (132 aa).

Belongs to the RutC family.

The catalysed reaction is (Z)-3-aminoacrylate + H2O + H(+) = 3-oxopropanoate + NH4(+). Functionally, involved in pyrimidine catabolism. Catalyzes the deamination of 3-aminoacrylate to malonic semialdehyde, a reaction that can also occur spontaneously. RutC may facilitate the reaction and modulate the metabolic fitness, rather than catalyzing essential functions. This is 3-aminoacrylate deaminase RutC from Cronobacter turicensis (strain DSM 18703 / CCUG 55852 / LMG 23827 / z3032).